The following is a 763-amino-acid chain: Phosphoglycerol transferase I (763 aa).

4 helical membrane-spanning segments follow: residues 1-21, 26-46, 77-97, and 108-128; these read MSEL…AWKA, WWFA…ITLF, ILPG…LGWI, and FGYS…SPAF.

Belongs to the OpgB family.

It localises to the cell inner membrane. The catalysed reaction is a phosphatidylglycerol + a membrane-derived-oligosaccharide D-glucose = a 1,2-diacyl-sn-glycerol + a membrane-derived-oligosaccharide 6-(glycerophospho)-D-glucose.. Its pathway is glycan metabolism; osmoregulated periplasmic glucan (OPG) biosynthesis. Its function is as follows. Transfers a phosphoglycerol residue from phosphatidylglycerol to the membrane-bound nascent glucan backbones. This Escherichia coli O7:K1 (strain IAI39 / ExPEC) protein is Phosphoglycerol transferase I.